Reading from the N-terminus, the 149-residue chain is Protein DOWN-REGULATED IN DIF1 11 (149 aa).

Residues 1 to 22 (MEKAILITFLIATTSMVYQTIG) form the signal peptide.

In terms of tissue distribution, mostly expressed in embryo sac cells. Restricted to synergid cells, especially in the filiform apparatus of mature female gametophyte, via MYB98-mediated transcription regulation. Also detected at low levels in egg and central cells.

This chain is Protein DOWN-REGULATED IN DIF1 11, found in Arabidopsis thaliana (Mouse-ear cress).